A 293-amino-acid chain; its full sequence is Diaminopimelate epimerase (293 aa).

Residues Asn-17, Gln-47, and Asn-67 each contribute to the substrate site. The Proton donor role is filled by Cys-76. Substrate is bound by residues 77 to 78 (GN), Asn-164, Asn-197, and 215 to 216 (ER). The active-site Proton acceptor is the Cys-224. 225–226 (GS) is a substrate binding site.

Belongs to the diaminopimelate epimerase family. As to quaternary structure, homodimer.

It is found in the cytoplasm. It carries out the reaction (2S,6S)-2,6-diaminopimelate = meso-2,6-diaminopimelate. The protein operates within amino-acid biosynthesis; L-lysine biosynthesis via DAP pathway; DL-2,6-diaminopimelate from LL-2,6-diaminopimelate: step 1/1. Its function is as follows. Catalyzes the stereoinversion of LL-2,6-diaminopimelate (L,L-DAP) to meso-diaminopimelate (meso-DAP), a precursor of L-lysine and an essential component of the bacterial peptidoglycan. The protein is Diaminopimelate epimerase of Rhodopseudomonas palustris (strain ATCC BAA-98 / CGA009).